Consider the following 479-residue polypeptide: ATP-dependent protease ATPase subunit HslU (479 aa).

ATP is bound by residues isoleucine 32, 74–79 (GVGKTE), aspartate 290, glutamate 355, and arginine 427.

It belongs to the ClpX chaperone family. HslU subfamily. A double ring-shaped homohexamer of HslV is capped on each side by a ring-shaped HslU homohexamer. The assembly of the HslU/HslV complex is dependent on binding of ATP.

The protein localises to the cytoplasm. Its function is as follows. ATPase subunit of a proteasome-like degradation complex; this subunit has chaperone activity. The binding of ATP and its subsequent hydrolysis by HslU are essential for unfolding of protein substrates subsequently hydrolyzed by HslV. HslU recognizes the N-terminal part of its protein substrates and unfolds these before they are guided to HslV for hydrolysis. The sequence is that of ATP-dependent protease ATPase subunit HslU from Leptospira interrogans serogroup Icterohaemorrhagiae serovar Lai (strain 56601).